The following is a 438-amino-acid chain: 3-phosphoshikimate 1-carboxyvinyltransferase (438 aa).

The 3-phosphoshikimate site is built by Lys21, Ser22, and Arg26. Lys21 serves as a coordination point for phosphoenolpyruvate. Residues Gly95 and Arg123 each coordinate phosphoenolpyruvate. 3-phosphoshikimate-binding residues include Ser167, Gln169, Asp315, and Lys342. A phosphoenolpyruvate-binding site is contributed by Gln169. The active-site Proton acceptor is Asp315. Residues Arg346 and Arg387 each contribute to the phosphoenolpyruvate site.

Belongs to the EPSP synthase family. In terms of assembly, monomer.

The protein resides in the cytoplasm. It carries out the reaction 3-phosphoshikimate + phosphoenolpyruvate = 5-O-(1-carboxyvinyl)-3-phosphoshikimate + phosphate. The protein operates within metabolic intermediate biosynthesis; chorismate biosynthesis; chorismate from D-erythrose 4-phosphate and phosphoenolpyruvate: step 6/7. Functionally, catalyzes the transfer of the enolpyruvyl moiety of phosphoenolpyruvate (PEP) to the 5-hydroxyl of shikimate-3-phosphate (S3P) to produce enolpyruvyl shikimate-3-phosphate and inorganic phosphate. In Coxiella burnetii (strain CbuG_Q212) (Coxiella burnetii (strain Q212)), this protein is 3-phosphoshikimate 1-carboxyvinyltransferase.